A 254-amino-acid polypeptide reads, in one-letter code: Triosephosphate isomerase (254 aa).

12-14 contacts substrate; that stretch reads NWK. Histidine 99 (electrophile) is an active-site residue. Glutamate 169 acts as the Proton acceptor in catalysis. Residues glycine 175, serine 214, and 235 to 236 contribute to the substrate site; that span reads GG.

This sequence belongs to the triosephosphate isomerase family. In terms of assembly, homodimer.

The protein localises to the cytoplasm. The enzyme catalyses D-glyceraldehyde 3-phosphate = dihydroxyacetone phosphate. It participates in carbohydrate biosynthesis; gluconeogenesis. Its pathway is carbohydrate degradation; glycolysis; D-glyceraldehyde 3-phosphate from glycerone phosphate: step 1/1. Its function is as follows. Involved in the gluconeogenesis. Catalyzes stereospecifically the conversion of dihydroxyacetone phosphate (DHAP) to D-glyceraldehyde-3-phosphate (G3P). This chain is Triosephosphate isomerase, found in Xanthobacter autotrophicus (strain ATCC BAA-1158 / Py2).